We begin with the raw amino-acid sequence, 376 residues long: MAASRDADEIHKDVQNYYGNVLKTSADLQTNACVTRAKPVPSYIRESLQNVHEDVSSRYYGCGLTVPERLENCRILDLGSGSGRDCYVLSQLVGEKGHVTGIDMTEVQVEVAKTYLEHHMEKFGFQAPNVTFLHGRIEKLAEAGIQSESYDIVISNCVINLVPDKQQVLQEVYRVLKHGGELYFSDVYASLEVPEDIKSHKVLWGECLGGALYWKDLAIIAQKIGFCPPRLVTADIITVENKELEGVLGDCRFVSATFRLFKLPKTEPAERCRVVYNGGIKGHEKELIFDANFTFKEGEAVAVDEETAAVLKNSRFAPDFLFTPVDASLPAPQGRSELETKVLIRDPFKLAEDSDKMKPRHAPEGTGGCCGKRKNC.

Ser-47 and Ser-336 each carry phosphoserine. Basic and acidic residues predominate over residues 354-363; it reads SDKMKPRHAP. The tract at residues 354–376 is disordered; it reads SDKMKPRHAPEGTGGCCGKRKNC.

Belongs to the methyltransferase superfamily. Arsenite methyltransferase family.

The protein resides in the cytoplasm. It is found in the cytosol. The catalysed reaction is arsenic triglutathione + [thioredoxin]-dithiol + S-adenosyl-L-methionine + 2 H2O = methylarsonous acid + [thioredoxin]-disulfide + 3 glutathione + S-adenosyl-L-homocysteine + H(+). The enzyme catalyses arsenic triglutathione + 2 [thioredoxin]-dithiol + 2 S-adenosyl-L-methionine + H2O = dimethylarsinous acid + 2 [thioredoxin]-disulfide + 3 glutathione + 2 S-adenosyl-L-homocysteine + 2 H(+). It catalyses the reaction arsenic triglutathione + 3 [thioredoxin]-dithiol + 3 S-adenosyl-L-methionine = trimethylarsine + 3 [thioredoxin]-disulfide + 3 glutathione + 3 S-adenosyl-L-homocysteine + 3 H(+). Its function is as follows. Catalyzes the transfer of a methyl group from AdoMet to trivalent arsenicals producing methylated and dimethylated arsenicals. It methylates arsenite to form methylarsonate, Me-AsO(3)H(2), which is reduced by methylarsonate reductase to methylarsonite, Me-As(OH)2. Methylarsonite is also a substrate and it is converted into the much less toxic compound dimethylarsinate (cacodylate), Me(2)As(O)-OH. The chain is Arsenite methyltransferase (As3mt) from Mus musculus (Mouse).